We begin with the raw amino-acid sequence, 37 residues long: Large ribosomal subunit protein bL36 (37 aa).

Belongs to the bacterial ribosomal protein bL36 family.

The protein is Large ribosomal subunit protein bL36 of Rippkaea orientalis (strain PCC 8801 / RF-1) (Cyanothece sp. (strain PCC 8801)).